Consider the following 482-residue polypeptide: Retrovirus-related Pol polyprotein from type-1 retrotransposable element R2 (482 aa).

Residues 1 to 84 (AYADDLILFA…DYFKYLGSRY (84 aa)) enclose the Reverse transcriptase domain. The interval 208–482 (QIPAVEKFYQ…ATGGRGRGDI (275 aa)) is nucleic acid-binding endonuclease.

The enzyme catalyses DNA(n) + a 2'-deoxyribonucleoside 5'-triphosphate = DNA(n+1) + diphosphate. The chain is Retrovirus-related Pol polyprotein from type-1 retrotransposable element R2 from Popillia japonica (Japanese beetle).